We begin with the raw amino-acid sequence, 102 residues long: Small integral membrane protein 29 (102 aa).

Residue Asn-3 is glycosylated (N-linked (GlcNAc...) asparagine). The chain crosses the membrane as a helical span at residues 21-41 (VLGPFFLITLVGVVVAVVMYV).

The protein resides in the membrane. The protein is Small integral membrane protein 29 of Mus musculus (Mouse).